The sequence spans 713 residues: Low-density lipoprotein receptor-related protein 10 (713 aa).

The N-terminal stretch at 1–16 (MLLATLLLLLLGGALA) is a signal peptide. The Extracellular segment spans residues 17 to 440 (HPDRIIFPNH…WDCSYVLPRK (424 aa)). 2 cysteine pairs are disulfide-bonded: C28/C57 and C80/C98. Residues 28–136 (CEDPPAVLLE…QGFLLSYSQD (109 aa)) enclose the CUB 1 domain. N-linked (GlcNAc...) asparagine glycosylation occurs at N56. Residue N111 is glycosylated (N-linked (GlcNAc...) asparagine). The LDL-receptor class A 1 domain occupies 139–175 (MCLQEEFQCLNHRCVSAVQRCDGVDACGDGSDEAGCS). Cystine bridges form between C140/C152, C147/C165, C159/C174, and C192/C220. Positions 192–305 (CNVTLEDFYG…RGFNATYHVR (114 aa)) constitute a CUB 2 domain. Residues N193 and N299 are each glycosylated (N-linked (GlcNAc...) asparagine). LDL-receptor class A domains are found at residues 307–354 (YCLP…EDCP), 355–397 (GCPP…RRCR), and 398–434 (HCQP…WDCS). Disulfide bonds link C308–C331, C315–C344, C338–C353, C356–C374, C363–C387, C381–C396, C399–C411, C406–C424, and C418–C433. The chain crosses the membrane as a helical span at residues 441 to 461 (VITAAVIGSLVCGLLLVIALG). Residues 462-713 (CTCKLYAIRT…AEAEDEPLLT (252 aa)) are Cytoplasmic-facing. Residues 564–637 (GLLPRTNTPA…SPAPTTVPEA (74 aa)) are disordered. Residues 569-584 (TNTPARASEARSQVTP) are compositionally biased toward polar residues. T596 carries the phosphothreonine modification. Over residues 621–636 (PLPSASTSPAPTTVPE) the composition is skewed to low complexity.

It belongs to the LDLR family. As to expression, expressed in blood leukocyte, lung, placenta, small intestine, liver, kidney, spleen, thymus, colon, skeletal muscle and heart.

Its subcellular location is the membrane. It localises to the coated pit. Its function is as follows. Probable receptor, which is involved in the internalization of lipophilic molecules and/or signal transduction. May be involved in the uptake of lipoprotein APOE in liver. The sequence is that of Low-density lipoprotein receptor-related protein 10 (LRP10) from Homo sapiens (Human).